Consider the following 122-residue polypeptide: UPF0145 protein BamMC406_5002 (122 aa).

The protein belongs to the UPF0145 family.

The sequence is that of UPF0145 protein BamMC406_5002 from Burkholderia ambifaria (strain MC40-6).